A 338-amino-acid polypeptide reads, in one-letter code: Nuclear hormone receptor family member nhr-108 (338 aa).

A DNA-binding region (nuclear receptor) is located at residues 7-82; it reads NQPCMVCGEI…IGMLEKVVAS (76 aa). The NR C4-type zinc-finger motif lies at 10-30; sequence CMVCGEISYSIRFGAVSCRAC. The NR C4-type; degenerate zinc finger occupies 46 to 65; sequence KRCNGACDLGKYHRKTCQSC. The NR LBD domain maps to 92–338; the sequence is NNQTILSGLE…QCPLYEATNE (247 aa).

The protein belongs to the nuclear hormone receptor family.

The protein resides in the nucleus. Functionally, orphan nuclear receptor. This Caenorhabditis elegans protein is Nuclear hormone receptor family member nhr-108 (nhr-108).